A 336-amino-acid chain; its full sequence is Phospho-N-acetylmuramoyl-pentapeptide-transferase (336 aa).

The next 10 membrane-spanning stretches (helical) occupy residues 3 to 23 (LTLI…PYFI), 53 to 73 (GGTV…LFSI), 78 to 98 (SLAL…IGFL), 118 to 138 (LALQ…PSGI), 143 to 163 (VFGY…FWVV), 174 to 194 (GIDG…GVIA), 200 to 220 (FDVL…FLFN), 226 to 246 (VFMG…ISIA), 251 to 271 (WTLL…MLQV), and 316 to 336 (AFLW…LYVF).

This sequence belongs to the glycosyltransferase 4 family. MraY subfamily. Mg(2+) is required as a cofactor.

The protein resides in the cell membrane. It catalyses the reaction UDP-N-acetyl-alpha-D-muramoyl-L-alanyl-gamma-D-glutamyl-L-lysyl-D-alanyl-D-alanine + di-trans,octa-cis-undecaprenyl phosphate = Mur2Ac(oyl-L-Ala-gamma-D-Glu-L-Lys-D-Ala-D-Ala)-di-trans,octa-cis-undecaprenyl diphosphate + UMP. It participates in cell wall biogenesis; peptidoglycan biosynthesis. Its function is as follows. Catalyzes the initial step of the lipid cycle reactions in the biosynthesis of the cell wall peptidoglycan: transfers peptidoglycan precursor phospho-MurNAc-pentapeptide from UDP-MurNAc-pentapeptide onto the lipid carrier undecaprenyl phosphate, yielding undecaprenyl-pyrophosphoryl-MurNAc-pentapeptide, known as lipid I. This chain is Phospho-N-acetylmuramoyl-pentapeptide-transferase, found in Streptococcus pyogenes serotype M6 (strain ATCC BAA-946 / MGAS10394).